Consider the following 611-residue polypeptide: uncharacterized protein (611 aa).

Residues 51 to 351 form the SAC domain; that stretch reads LYGFIRLKIY…DYHKQGSRNL (301 aa).

It to yeast RSD1 and S.pombe SpBC19F5.03.

This is an uncharacterized protein from Schizosaccharomyces pombe (strain 972 / ATCC 24843) (Fission yeast).